Here is a 168-residue protein sequence, read N- to C-terminus: Ribosome maturation factor RimM (168 aa).

A PRC barrel domain is found at 96 to 168; sequence EGDYYWTDLI…IIVVEWDADF (73 aa).

It belongs to the RimM family. As to quaternary structure, binds ribosomal protein uS19.

The protein resides in the cytoplasm. An accessory protein needed during the final step in the assembly of 30S ribosomal subunit, possibly for assembly of the head region. Essential for efficient processing of 16S rRNA. May be needed both before and after RbfA during the maturation of 16S rRNA. It has affinity for free ribosomal 30S subunits but not for 70S ribosomes. The polypeptide is Ribosome maturation factor RimM (Coxiella burnetii (strain RSA 331 / Henzerling II)).